Here is a 189-residue protein sequence, read N- to C-terminus: Interferon alpha-13 (189 aa).

The first 23 residues, 1 to 23 (MARPCAFLMVLVVLSYWSACSLG), serve as a signal peptide directing secretion. 2 cysteine pairs are disulfide-bonded: cysteine 24-cysteine 122 and cysteine 52-cysteine 162. Asparagine 94 and asparagine 101 each carry an N-linked (GlcNAc...) asparagine glycan.

It belongs to the alpha/beta interferon family.

The protein localises to the secreted. Functionally, exhibits antiviral activity against Theiler's virus, Mengo virus and vesicular stomatitis virus. Interferons alpha stimulate the production of two enzymes: a protein kinase and an oligoadenylate synthetase. The polypeptide is Interferon alpha-13 (Ifna13) (Mus musculus (Mouse)).